The following is a 441-amino-acid chain: Proline--tRNA ligase (441 aa).

The protein belongs to the class-II aminoacyl-tRNA synthetase family. ProS type 2 subfamily. As to quaternary structure, homodimer.

The protein localises to the cytoplasm. It carries out the reaction tRNA(Pro) + L-proline + ATP = L-prolyl-tRNA(Pro) + AMP + diphosphate. Functionally, catalyzes the attachment of proline to tRNA(Pro) in a two-step reaction: proline is first activated by ATP to form Pro-AMP and then transferred to the acceptor end of tRNA(Pro). This Bartonella henselae (strain ATCC 49882 / DSM 28221 / CCUG 30454 / Houston 1) (Rochalimaea henselae) protein is Proline--tRNA ligase.